The following is a 173-amino-acid chain: EDLRNVTPPKVSLFEPSKAEIANKQKATLVCLARGFFPDHVELSWWVNGKEVHSGVSTDPQAYKESNYSYCLSSRLRVSATFWHNPRNHFRCQVQFHGLSEEDKWPEGSPKPVTQNISAEAWGRADCGITSASYHQGVLSATILYEILLGKATLYAVLVSGLVLMAMVKKKNS.

The tract at residues E1–E146 is c region. N67 and N116 each carry an N-linked (GlcNAc...) asparagine glycan. A helical transmembrane segment spans residues I147–V168. Residues K169 to S173 lie on the Cytoplasmic side of the membrane.

The protein localises to the membrane. In Mus musculus (Mouse), this protein is T-cell receptor beta-2 chain C region.